Here is a 1064-residue protein sequence, read N- to C-terminus: Ribosome quality control complex subunit NEMF (1064 aa).

Threonine 7 is modified (phosphothreonine). Residues 296 to 359 are a coiled coil; the sequence is VDEFYSKIEG…LIEMNLQIVD (64 aa). Residue serine 417 is modified to Phosphoserine. The interval 420-451 is disordered; sequence EDGDGDASIENSDAEAPKGKKKKQKNKQLQKP. Positions 438–447 are enriched in basic residues; it reads GKKKKQKNKQ. Positions 481–512 form a coiled coil; the sequence is AAKKTQRTVEAAEKAFKSAEKKTKQTLKEVQT. Residues 694–707 show a composition bias toward acidic residues; sequence EQLEGGDSSEEETE. 2 disordered regions span residues 694 to 718 and 731 to 973; these read EQLE…DVEL and SGRD…SLTG. Over residues 731-756 the composition is skewed to basic and acidic residues; the sequence is SGRDELSSEDGEAKAVTKDQEPIGEM. Serine 737 carries the phosphoserine modification. Polar residues predominate over residues 771–781; it reads IDLSHLQSQRP. Positions 828-839 are enriched in basic and acidic residues; sequence IEEKDKERESAV. The stretch at 858-882 forms a coiled coil; sequence KRGQKSKMKKMKEKYKDQDDEDREL. A compositionally biased stretch (basic residues) spans 859–870; sequence RGQKSKMKKMKE. Positions 947-959 are enriched in basic and acidic residues; the sequence is DDPHDDKEEHDLD. Residues 960–973 show a composition bias toward polar residues; that stretch reads QQGNEENLFDSLTG.

Belongs to the NEMF family. In terms of assembly, component of the ribosome quality control complex (RQC), composed of the E3 ubiquitin ligase LTN1, TCF25 and NEMF associated with the 60S ribosomal subunit. The complex probably also contains VCP/p97 and its ubiquitin-binding cofactors. Interacts (via its N-terminus) with XPO1.

The protein localises to the cytoplasm. It is found in the cytosol. Its subcellular location is the nucleus. In terms of biological role, key component of the ribosome quality control complex (RQC), a ribosome-associated complex that mediates the extraction of incompletely synthesized nascent chains from stalled ribosomes as well as their ubiquitin-mediated proteasomal degradation. Thereby, frees 60S subunit ribosomes from the stalled translation complex and prevents the accumulation of nascent polypeptide chains that are potentially toxic for the cell. Within the RQC complex, NEMF specifically binds stalled 60S ribosomal subunits by recognizing an exposed, nascent chain-conjugated tRNA moiety and promotes the recruitment of LTN1 to stalled 60S subunits. Following binding to stalled 60S ribosomal subunits, NEMF mediates CAT tailing by recruiting alanine-charged tRNA to the A-site and directing the elongation of stalled nascent chains independently of mRNA or 40S subunits, leading to non-templated C-terminal alanine extensions (CAT tails). Mainly recruits alanine-charged tRNAs, but can also other amino acid-charged tRNAs. CAT tailing is required to promote ubiquitination of stalled nascent chains by different E3 ubiquitin-protein ligases. In the canonical RQC pathway (RQC-L), CAT tailing facilitates LTN1-dependent ubiquitination by exposing lysine residues that would otherwise remain buried in the ribosomal exit tunnel. In the alternative RQC pathway (RQC-C) CAT tailing creates an C-degron mainly composed of alanine that is recognized by the CRL2(KLHDC10) and RCHY1/PIRH2 E3 ligases, leading to ubiquitination and degradation of stalled nascent chains. NEMF may also indirectly play a role in nuclear export. The polypeptide is Ribosome quality control complex subunit NEMF (Mus musculus (Mouse)).